Consider the following 152-residue polypeptide: Methylglyoxal synthase (152 aa).

One can recognise an MGS-like domain in the interval 6-152 (RKISARKSIA…YDGYLAERLA (147 aa)). Substrate contacts are provided by residues His-19, Lys-23, 45-48 (TGTT), and 65-66 (SG). Asp-71 functions as the Proton donor/acceptor in the catalytic mechanism. His-98 contacts substrate.

This sequence belongs to the methylglyoxal synthase family.

The enzyme catalyses dihydroxyacetone phosphate = methylglyoxal + phosphate. Catalyzes the formation of methylglyoxal from dihydroxyacetone phosphate. In Actinobacillus pleuropneumoniae serotype 3 (strain JL03), this protein is Methylglyoxal synthase.